Here is a 101-residue protein sequence, read N- to C-terminus: MKKVLALVVAAAMGLSSAAFAAETTATAAPAASTAAPAKTVHHKKHHKAAKPAAEQKAQAAKKHHKKAAKPAVEQKAQAAKKHHKKAAKHEAAKPAAQPAA.

Positions 1–21 (MKKVLALVVAAAMGLSSAAFA) are cleaved as a signal peptide. Positions 22–59 (AETTATAAPAASTAAPAKTVHHKKHHKAAKPAAEQKAQ) are excised as a propeptide. The span at 26 to 39 (ATAAPAASTAAPAK) shows a compositional bias: low complexity. The tract at residues 26-101 (ATAAPAASTA…AAKPAAQPAA (76 aa)) is disordered. Composition is skewed to basic residues over residues 40-50 (TVHHKKHHKAA), 60-69 (AAKKHHKKAA), and 79-88 (AAKKHHKKAA).

The protein belongs to the Asr family. In terms of processing, proteolytic processing gives rise to the active protein.

The protein localises to the periplasm. Its function is as follows. Required for growth and/or survival at acidic conditions. This Enterobacter cloacae protein is Acid shock protein (asr).